A 385-amino-acid polypeptide reads, in one-letter code: MKYDVVVIGGRVAGSTAAYHAARLGLSVLLLERNPEIGTPVQCAGGVSDSFFKSTGLKPLPEFTCTRIRAAAVNGPLGARIVTENPVVRGYILERKSLDKYLALRAAEAGADVLTMSIAGDLIFREGSVSGVVFRGPDGVQEVECGMVIAADGVQSSIARKAGLETGFRPADLCSCVQYEVAGVDVDPETMEFYFGSRFAPSGYLWVFPKGEGRANVGLGIRRKSCSERGPLSYLNRFMEERGFKRIEFNAGAVPVCGPIERTFTDGLLVVGDAAGQVDPLTGGGIHLAAECAKIAGEVAAEAIESGRVDGRFLSRYEMRWRKKIGKNLERSLKFRKILDGLGDEELDALLRSLEGKDLSSISKISLLRILKDYPSMLRILRDIL.

Residues A13, E32, C43, A44, G46, R95, A119, D273, G285, and I286 each coordinate FAD.

It belongs to the geranylgeranyl reductase family. DGGGPL reductase subfamily. It depends on FAD as a cofactor.

The catalysed reaction is a 2,3-bis-O-phytanyl-sn-glycerol 1-phospholipid + 8 A = a 2,3-bis-O-(geranylgeranyl)-sn-glycerol 1-phospholipid + 8 AH2. The enzyme catalyses 2,3-bis-O-(phytanyl)-sn-glycerol 1-phosphate + 8 A = 2,3-bis-O-(geranylgeranyl)-sn-glycerol 1-phosphate + 8 AH2. It carries out the reaction CDP-2,3-bis-O-(geranylgeranyl)-sn-glycerol + 8 AH2 = CDP-2,3-bis-O-(phytanyl)-sn-glycerol + 8 A. It catalyses the reaction archaetidylserine + 8 AH2 = 2,3-bis-O-phytanyl-sn-glycero-3-phospho-L-serine + 8 A. It functions in the pathway membrane lipid metabolism; glycerophospholipid metabolism. Functionally, is involved in the reduction of 2,3-digeranylgeranylglycerophospholipids (unsaturated archaeols) into 2,3-diphytanylglycerophospholipids (saturated archaeols) in the biosynthesis of archaeal membrane lipids. Catalyzes the formation of archaetidic acid (2,3-di-O-phytanyl-sn-glyceryl phosphate) from 2,3-di-O-geranylgeranylglyceryl phosphate (DGGGP) via the hydrogenation of each double bond of the isoprenoid chains. Is also probably able to reduce double bonds of geranyl groups in CDP-2,3-bis-O-(geranylgeranyl)-sn-glycerol and archaetidylserine, thus acting at various stages in the biosynthesis of archaeal membrane lipids. The sequence is that of Digeranylgeranylglycerophospholipid reductase 2 from Methanothermobacter thermautotrophicus (strain ATCC 29096 / DSM 1053 / JCM 10044 / NBRC 100330 / Delta H) (Methanobacterium thermoautotrophicum).